A 57-amino-acid polypeptide reads, in one-letter code: MSRLFVFILIALFLSAIIDVMSNFKVEGACSKPCRKYCIDKGARNGKCINGRCHCYY.

Residues 1–22 (MSRLFVFILIALFLSAIIDVMS) form the signal peptide. 3 disulfides stabilise this stretch: Cys-30-Cys-48, Cys-34-Cys-53, and Cys-38-Cys-55.

It belongs to the short scorpion toxin superfamily. Potassium channel inhibitor family. Alpha-KTx 26 subfamily. Expressed by the venom gland.

The protein resides in the secreted. Recombinant toxin that reversibly inhibits the potassium current of mKv1.3/KCNA3 channel stably expressed in COS7 cells (IC(50)=150 nM). Also shows a weak inhibition on Kv1.2/KCNA2, Kv1.3/KCNA3 and TRPV1 channels. The protein is Potassium channel toxin alpha-KTx 26.1 of Olivierus martensii (Manchurian scorpion).